The following is a 237-amino-acid chain: Intracellular ribonuclease LX (237 aa).

The propeptide occupies 1-24 (MMKSQKKLLIKIIVVQCLLVLCVT). Q36 is a binding site for RNA. C42 and C48 form a disulfide bridge. Residues H63, F113, 116-117 (HE), and 120-121 (KH) contribute to the RNA site. The Proton donor role is filled by H63. Cystine bridges form between C78-C124, C183-C219, and C199-C210. The active site involves E117. Catalysis depends on H121, which acts as the Proton acceptor.

Belongs to the RNase T2 family.

The protein localises to the cytoplasm. The enzyme catalyses a ribonucleotidyl-ribonucleotide-RNA + H2O = a 3'-end 3'-phospho-ribonucleotide-RNA + a 5'-end dephospho-ribonucleoside-RNA + H(+). This chain is Intracellular ribonuclease LX (RNALX), found in Solanum lycopersicum (Tomato).